The sequence spans 198 residues: Nucleoid occlusion factor SlmA (198 aa).

In terms of domain architecture, HTH tetR-type spans 9–70 (RNRREEILQS…SLIEFIEDSL (62 aa)). A DNA-binding region (H-T-H motif) is located at residues 33–52 (TTAKLAASVGVSEAALYRHF). The stretch at 117–145 (EQDRLQGRINQLFERIEAQLRQVLREKKM) forms a coiled coil.

Belongs to the nucleoid occlusion factor SlmA family. As to quaternary structure, homodimer. Interacts with FtsZ.

It is found in the cytoplasm. Its subcellular location is the nucleoid. In terms of biological role, required for nucleoid occlusion (NO) phenomenon, which prevents Z-ring formation and cell division over the nucleoid. Acts as a DNA-associated cell division inhibitor that binds simultaneously chromosomal DNA and FtsZ, and disrupts the assembly of FtsZ polymers. SlmA-DNA-binding sequences (SBS) are dispersed on non-Ter regions of the chromosome, preventing FtsZ polymerization at these regions. The polypeptide is Nucleoid occlusion factor SlmA (Cronobacter sakazakii (strain ATCC BAA-894) (Enterobacter sakazakii)).